The sequence spans 428 residues: Homocitrate synthase, cytosolic isozyme (428 aa).

A Pyruvate carboxyltransferase domain is found at 23 to 276; the sequence is FQLIDSTLRE…KSKYKLHKIR (254 aa). Position 31 (Arg31) interacts with 2-oxoglutarate. Mg(2+) is bound at residue Glu32. Residues His91, Arg151, and Thr185 each coordinate 2-oxoglutarate. Residues His212 and His214 each coordinate Mg(2+). Residue His309 is the Proton acceptor of the active site. At Ser385 the chain carries Phosphoserine. Thr396 carries the phosphothreonine modification. The disordered stretch occupies residues 399 to 428; it reads VLSAKKNKKNDSDVPELATIPAAKRTKPSA. Ser401 and Ser410 each carry phosphoserine.

It belongs to the alpha-IPM synthase/homocitrate synthase family. Homocitrate synthase LYS20/LYS21 subfamily. The cofactor is Mg(2+). Requires Mn(2+) as cofactor.

The protein localises to the cytoplasm. It catalyses the reaction acetyl-CoA + 2-oxoglutarate + H2O = (2R)-homocitrate + CoA + H(+). It functions in the pathway amino-acid biosynthesis; L-lysine biosynthesis via AAA pathway; L-alpha-aminoadipate from 2-oxoglutarate: step 1/5. Functionally, catalyzes the aldol-type condensation of 2-oxoglutarate with acetyl-CoA to yield homocitrate. Carries out the first step of the alpha-aminoadipate (AAA) lysine biosynthesis pathway. In Saccharomyces cerevisiae (strain ATCC 204508 / S288c) (Baker's yeast), this protein is Homocitrate synthase, cytosolic isozyme (LYS20).